The sequence spans 246 residues: 2,3-bisphosphoglycerate-dependent phosphoglycerate mutase (246 aa).

Substrate is bound by residues 9 to 16, 22 to 23, R61, 88 to 91, K99, 115 to 116, and 181 to 182; these read RHGQSAWN, TG, ERHY, RR, and GN. H10 (tele-phosphohistidine intermediate) is an active-site residue. E88 (proton donor/acceptor) is an active-site residue.

It belongs to the phosphoglycerate mutase family. BPG-dependent PGAM subfamily.

The enzyme catalyses (2R)-2-phosphoglycerate = (2R)-3-phosphoglycerate. Its pathway is carbohydrate degradation; glycolysis; pyruvate from D-glyceraldehyde 3-phosphate: step 3/5. Its function is as follows. Catalyzes the interconversion of 2-phosphoglycerate and 3-phosphoglycerate. The sequence is that of 2,3-bisphosphoglycerate-dependent phosphoglycerate mutase from Bifidobacterium longum (strain DJO10A).